A 319-amino-acid polypeptide reads, in one-letter code: Protease HtpX homolog (319 aa).

2 helical membrane-spanning segments follow: residues 3–23 (LTVLALIGGYIVVLGVAAWAL) and 32–52 (TGVAFMLSLLALAMVLVQWLF). His134 contributes to the Zn(2+) binding site. Glu135 is an active-site residue. Residue His138 coordinates Zn(2+). The next 2 membrane-spanning stretches (helical) occupy residues 146 to 166 (VILALSLIPIAAFLIGRTLVW) and 182 to 202 (MALVAVGAALLAAGMVFQLIV). Glu210 is a binding site for Zn(2+).

Belongs to the peptidase M48B family. The cofactor is Zn(2+).

It localises to the cell membrane. This chain is Protease HtpX homolog, found in Aeropyrum pernix (strain ATCC 700893 / DSM 11879 / JCM 9820 / NBRC 100138 / K1).